Consider the following 187-residue polypeptide: Protein GrpE (187 aa).

The segment covering 1-11 has biased composition (basic and acidic residues); that stretch reads MTDSSNEHETE. A disordered region spans residues 1–23; that stretch reads MTDSSNEHETENPSVPNPDNEIQ.

The protein belongs to the GrpE family. Homodimer.

It is found in the cytoplasm. Participates actively in the response to hyperosmotic and heat shock by preventing the aggregation of stress-denatured proteins, in association with DnaK and GrpE. It is the nucleotide exchange factor for DnaK and may function as a thermosensor. Unfolded proteins bind initially to DnaJ; upon interaction with the DnaJ-bound protein, DnaK hydrolyzes its bound ATP, resulting in the formation of a stable complex. GrpE releases ADP from DnaK; ATP binding to DnaK triggers the release of the substrate protein, thus completing the reaction cycle. Several rounds of ATP-dependent interactions between DnaJ, DnaK and GrpE are required for fully efficient folding. The polypeptide is Protein GrpE (Chlamydia felis (strain Fe/C-56) (Chlamydophila felis)).